The chain runs to 785 residues: Putative lipase C4A8.10 (785 aa).

Disordered stretches follow at residues 29–99 and 115–140; these read HSAT…SSDF and NTNA…VGTS. The span at 32–41 shows a compositional bias: low complexity; it reads TSSTTVPPTV. Residues 47–58 are compositionally biased toward basic and acidic residues; sequence TKKESGSIEDRA. Polar residues predominate over residues 63-86; the sequence is MTISSGENISKQISENNSSTNPKH. 2 stretches are compositionally biased toward low complexity: residues 89 to 99 and 127 to 140; these read SESSPLLSSDF and GVSH…VGTS. The active-site Charge relay system is Ser390.

Belongs to the putative lipase ROG1 family.

This chain is Putative lipase C4A8.10, found in Schizosaccharomyces pombe (strain 972 / ATCC 24843) (Fission yeast).